We begin with the raw amino-acid sequence, 278 residues long: MYSSSSVSKRFVLVPIVVVVTTQLLLVRNVSSLNLTNSYLHHKCVVNQGKYKPGSKYEKSLDDIIQSFSNKDKDSYGFRTGYSMKAYGKEPDMVSITYQCRIDSRGPKCQSCVVTAGYELLRKRCPRYKEAIIWYDQCLVEFSSLDTSGQINYDDNFCMPSAKNLIGNSISLEERLHLLNNLTKIAVTKIDKNIEGIKKPVLYAAGEKRLGTKSLYGMVQCSADLSVQGCNECMLYYIVHFQECWENKQGVRVLSRSCNFRYELYPFINPKGPYYTKF.

An N-terminal signal peptide occupies residues 1–32 (MYSSSSVSKRFVLVPIVVVVTTQLLLVRNVSS). Gnk2-homologous domains lie at 39–147 (YLHH…SLDT) and 160–267 (PSAK…LYPF).

It belongs to the cysteine-rich repeat secretory protein family.

It is found in the secreted. In Arabidopsis thaliana (Mouse-ear cress), this protein is Cysteine-rich repeat secretory protein 18 (CRRSP18).